A 28-amino-acid polypeptide reads, in one-letter code: Palustrin-1a (28 aa).

Cysteines 22 and 28 form a disulfide.

Expressed by the skin glands.

It is found in the secreted. In terms of biological role, antimicrobial activity against Gram-negative bacterium E.coli. The polypeptide is Palustrin-1a (Lithobates palustris (Pickerel frog)).